The following is a 95-amino-acid chain: Aspartyl/glutamyl-tRNA(Asn/Gln) amidotransferase subunit C (95 aa).

The protein belongs to the GatC family. Heterotrimer of A, B and C subunits.

The catalysed reaction is L-glutamyl-tRNA(Gln) + L-glutamine + ATP + H2O = L-glutaminyl-tRNA(Gln) + L-glutamate + ADP + phosphate + H(+). It catalyses the reaction L-aspartyl-tRNA(Asn) + L-glutamine + ATP + H2O = L-asparaginyl-tRNA(Asn) + L-glutamate + ADP + phosphate + 2 H(+). Its function is as follows. Allows the formation of correctly charged Asn-tRNA(Asn) or Gln-tRNA(Gln) through the transamidation of misacylated Asp-tRNA(Asn) or Glu-tRNA(Gln) in organisms which lack either or both of asparaginyl-tRNA or glutaminyl-tRNA synthetases. The reaction takes place in the presence of glutamine and ATP through an activated phospho-Asp-tRNA(Asn) or phospho-Glu-tRNA(Gln). This is Aspartyl/glutamyl-tRNA(Asn/Gln) amidotransferase subunit C from Magnetococcus marinus (strain ATCC BAA-1437 / JCM 17883 / MC-1).